Reading from the N-terminus, the 388-residue chain is MKHLHRFFSSDASGGIILIIAAILAMMMANSGATSGWYHDFLETPVQLRVGSLEINKNMLLWINDALMAVFFLLVGLEVKRELMQGSLASLRQAAFPVIAAIGGMIVPALLYLAFNYADPITREGWAIPAATDIAFALGVLALLGSRVPLALKIFLMALAIIDDLGAIIIIALFYTNDLSMASLGVAAVAIAVLAVLNLCGVRRTGVYILVGVVLWTAVLKSGVHATLAGVIVGFFIPLKEKHGRSPAKRLEHVLHPWVAYLILPLFAFANAGVSLQGVTLDGLTSILPLGIIAGLLIGKPLGISLFCWLALRLKLAHLPEGTTYQQIMAVGILCGIGFTMSIFIASLAFGSVDPELINWAKLGILVGSISSAVIGYSWLRVRLRPSV.

Over 1–11 the chain is Cytoplasmic; it reads MKHLHRFFSSD. A helical membrane pass occupies residues 12 to 31; the sequence is ASGGIILIIAAILAMMMANS. The Periplasmic segment spans residues 32-58; that stretch reads GATSGWYHDFLETPVQLRVGSLEINKN. A helical transmembrane segment spans residues 59 to 80; sequence MLLWINDALMAVFFLLVGLEVK. Residues 81-96 lie on the Cytoplasmic side of the membrane; the sequence is RELMQGSLASLRQAAF. A helical transmembrane segment spans residues 97 to 116; the sequence is PVIAAIGGMIVPALLYLAFN. Residues 117–122 lie on the Periplasmic side of the membrane; sequence YADPIT. Residues 123–130 traverse the membrane as a helical segment; the sequence is REGWAIPA. Residues 131-154 are Cytoplasmic-facing; the sequence is ATDIAFALGVLALLGSRVPLALKI. A helical membrane pass occupies residues 155 to 176; that stretch reads FLMALAIIDDLGAIIIIALFYT. Residues 177-180 are Periplasmic-facing; the sequence is NDLS. The chain crosses the membrane as a helical span at residues 181–200; sequence MASLGVAAVAIAVLAVLNLC. The Cytoplasmic portion of the chain corresponds to 201 to 204; it reads GVRR. The chain crosses the membrane as a helical span at residues 205–222; the sequence is TGVYILVGVVLWTAVLKS. Residue G223 is a topological domain, periplasmic. Residues 224–236 form a helical membrane-spanning segment; it reads VHATLAGVIVGFF. Residues 237–253 are Cytoplasmic-facing; the sequence is IPLKEKHGRSPAKRLEH. Residues 254–272 traverse the membrane as a helical segment; the sequence is VLHPWVAYLILPLFAFANA. Residues 273-286 lie on the Periplasmic side of the membrane; that stretch reads GVSLQGVTLDGLTS. A helical transmembrane segment spans residues 287–310; that stretch reads ILPLGIIAGLLIGKPLGISLFCWL. The Cytoplasmic portion of the chain corresponds to 311-339; that stretch reads ALRLKLAHLPEGTTYQQIMAVGILCGIGF. The helical transmembrane segment at 340 to 350 threads the bilayer; that stretch reads TMSIFIASLAF. Residues 351-357 are Periplasmic-facing; the sequence is GSVDPEL. Residues 358–380 form a helical membrane-spanning segment; that stretch reads INWAKLGILVGSISSAVIGYSWL. The Cytoplasmic portion of the chain corresponds to 381-388; the sequence is RVRLRPSV.

This sequence belongs to the NhaA Na(+)/H(+) (TC 2.A.33) antiporter family.

Its subcellular location is the cell inner membrane. The catalysed reaction is Na(+)(in) + 2 H(+)(out) = Na(+)(out) + 2 H(+)(in). Na(+)/H(+) antiporter that extrudes sodium in exchange for external protons. The protein is Na(+)/H(+) antiporter NhaA of Shigella boydii serotype 4 (strain Sb227).